Consider the following 383-residue polypeptide: Agmatine deiminase (383 aa).

The agmatine site is built by D220 and D226. C366 acts as the Amidino-cysteine intermediate in catalysis.

It belongs to the agmatine deiminase family. Forms homodimers.

It catalyses the reaction agmatine + H2O = N-carbamoylputrescine + NH4(+). The protein operates within amine and polyamine biosynthesis; putrescine biosynthesis via agmatine pathway; N-carbamoylputrescine from agmatine: step 1/1. Inhibited by N-ethylmaleimide and iodoacetamide. In terms of biological role, mediates the hydrolysis of agmatine into N-carbamoylputrescine in the arginine decarboxylase (ADC) pathway of putrescine biosynthesis, a basic polyamine. This chain is Agmatine deiminase (AIH), found in Arabidopsis thaliana (Mouse-ear cress).